Reading from the N-terminus, the 252-residue chain is Transcriptional regulatory protein HptR (252 aa).

A Response regulatory domain is found at Lys-3–Val-118. Asp-55 is subject to 4-aspartylphosphate. Positions Asn-153–Gln-250 constitute an HTH araC/xylS-type domain. 2 DNA-binding regions (H-T-H motif) span residues Ser-170–Val-191 and His-217–Leu-240.

Post-translationally, phosphorylated by HptS.

It is found in the cytoplasm. Functionally, member of the two-component regulatory system HptS/HptR that regulates genes involved in hexose phosphate transport system in response to changes in extracellular phosphate sources. Activates uhpT expression to facilitate glucose-6-phosphate/G6P utilization by directly binding to its promoter. Antagonizes CcpA-dependent transcription of a subset of CcpA-regulated genes involved in antibiotic susceptibility. This Staphylococcus aureus (strain Mu50 / ATCC 700699) protein is Transcriptional regulatory protein HptR (hptR).